The primary structure comprises 121 residues: Flagellar protein FliT (121 aa).

The required for homodimerization stretch occupies residues 1 to 50; the sequence is MNNAPHLYFAWQQLVEKSQLMLRLATEEQWDELITSEMAYVNAVQEIAHL. Residues 60–98 are fliD binding; that stretch reads MQEQLRPMLRLILDNESKVKQLLQIRMDELAKLVGQSSV.

Belongs to the FliT family. In terms of assembly, homodimer. Interacts with FliD and FlhC.

It localises to the cytoplasm. The protein localises to the cytosol. Dual-function protein that regulates the transcription of class 2 flagellar operons and that also acts as an export chaperone for the filament-capping protein FliD. As a transcriptional regulator, acts as an anti-FlhDC factor; it directly binds FlhC, thus inhibiting the binding of the FlhC/FlhD complex to class 2 promoters, resulting in decreased expression of class 2 flagellar operons. As a chaperone, effects FliD transition to the membrane by preventing its premature polymerization, and by directing it to the export apparatus. This Escherichia coli (strain 55989 / EAEC) protein is Flagellar protein FliT.